A 700-amino-acid chain; its full sequence is Elongation factor G (700 aa).

In terms of domain architecture, tr-type G spans 13-288 (SKIRNIGITA…AVIDYLPAPD (276 aa)). GTP is bound by residues 22 to 29 (AHIDAGKT), 86 to 90 (DTPGH), and 140 to 143 (NKLD).

Belongs to the TRAFAC class translation factor GTPase superfamily. Classic translation factor GTPase family. EF-G/EF-2 subfamily.

It is found in the cytoplasm. Functionally, catalyzes the GTP-dependent ribosomal translocation step during translation elongation. During this step, the ribosome changes from the pre-translocational (PRE) to the post-translocational (POST) state as the newly formed A-site-bound peptidyl-tRNA and P-site-bound deacylated tRNA move to the P and E sites, respectively. Catalyzes the coordinated movement of the two tRNA molecules, the mRNA and conformational changes in the ribosome. The chain is Elongation factor G from Gluconobacter oxydans (strain 621H) (Gluconobacter suboxydans).